We begin with the raw amino-acid sequence, 135 residues long: Ribosome-binding factor A (135 aa).

It belongs to the RbfA family. In terms of assembly, monomer. Binds 30S ribosomal subunits, but not 50S ribosomal subunits or 70S ribosomes.

Its subcellular location is the cytoplasm. Its function is as follows. One of several proteins that assist in the late maturation steps of the functional core of the 30S ribosomal subunit. Associates with free 30S ribosomal subunits (but not with 30S subunits that are part of 70S ribosomes or polysomes). Required for efficient processing of 16S rRNA. May interact with the 5'-terminal helix region of 16S rRNA. The sequence is that of Ribosome-binding factor A from Bartonella henselae (strain ATCC 49882 / DSM 28221 / CCUG 30454 / Houston 1) (Rochalimaea henselae).